Consider the following 596-residue polypeptide: Elongation factor 4 (596 aa).

A tr-type G domain is found at 2–184 (RNIRNFSIIA…AIVHRIPPPT (183 aa)). Residues 14–19 (DHGKST) and 131–134 (NKID) each bind GTP.

This sequence belongs to the TRAFAC class translation factor GTPase superfamily. Classic translation factor GTPase family. LepA subfamily.

The protein resides in the cell inner membrane. The enzyme catalyses GTP + H2O = GDP + phosphate + H(+). In terms of biological role, required for accurate and efficient protein synthesis under certain stress conditions. May act as a fidelity factor of the translation reaction, by catalyzing a one-codon backward translocation of tRNAs on improperly translocated ribosomes. Back-translocation proceeds from a post-translocation (POST) complex to a pre-translocation (PRE) complex, thus giving elongation factor G a second chance to translocate the tRNAs correctly. Binds to ribosomes in a GTP-dependent manner. The polypeptide is Elongation factor 4 (Xanthomonas oryzae pv. oryzae (strain PXO99A)).